Consider the following 148-residue polypeptide: Small ribosomal subunit protein bS16 (148 aa).

A disordered region spans residues 107-148; it reads AAARAAAGAEDRPATTPKKAKKAASADGADAPAADAPTAAGQ. Positions 129 to 148 are enriched in low complexity; it reads AASADGADAPAADAPTAAGQ.

It belongs to the bacterial ribosomal protein bS16 family.

The sequence is that of Small ribosomal subunit protein bS16 from Frankia alni (strain DSM 45986 / CECT 9034 / ACN14a).